The sequence spans 284 residues: Sulfotransferase 4A1 (284 aa).

3 positions are modified to phosphothreonine: Thr8, Thr11, and Thr205.

Belongs to the sulfotransferase 1 family. In terms of tissue distribution, highly expressed in the cerebral cortex and frontal lobe, slightly less in the cerebellum, occipital and temporal lobes, relatively low in the medulla and putamen, and lowest in the spinal cord. No expression detected in the pancreas. Highly expressed in fetal brain and occipital lobe, slightly less in the whole brain, frontal lobe, hippocampus, and lung, very low expression in cerebellum, medulla oblongata, temporal lobe, testis, kidney and appendix.

It is found in the cytoplasm. Functionally, atypical sulfotransferase family member with very low affinity for 3'-phospho-5'-adenylyl sulfate (PAPS) and very low catalytic activity towards L-triiodothyronine, thyroxine, estrone, p-nitrophenol, 2-naphthylamine, and 2-beta-naphthol. May have a role in the metabolism of drugs and neurotransmitters in the CNS. In Homo sapiens (Human), this protein is Sulfotransferase 4A1 (SULT4A1).